Consider the following 657-residue polypeptide: tRNA 5-methylaminomethyl-2-thiouridine biosynthesis bifunctional protein MnmC (657 aa).

A tRNA (mnm(5)s(2)U34)-methyltransferase region spans residues 1–239 (MTDRIVPATL…KRAMLVGEFA (239 aa)). Positions 263-657 (IGAGLAGCAV…VRALRHGRVA (395 aa)) are FAD-dependent cmnm(5)s(2)U34 oxidoreductase.

This sequence in the N-terminal section; belongs to the methyltransferase superfamily. tRNA (mnm(5)s(2)U34)-methyltransferase family. In the C-terminal section; belongs to the DAO family. It depends on FAD as a cofactor.

It is found in the cytoplasm. The enzyme catalyses 5-aminomethyl-2-thiouridine(34) in tRNA + S-adenosyl-L-methionine = 5-methylaminomethyl-2-thiouridine(34) in tRNA + S-adenosyl-L-homocysteine + H(+). Functionally, catalyzes the last two steps in the biosynthesis of 5-methylaminomethyl-2-thiouridine (mnm(5)s(2)U) at the wobble position (U34) in tRNA. Catalyzes the FAD-dependent demodification of cmnm(5)s(2)U34 to nm(5)s(2)U34, followed by the transfer of a methyl group from S-adenosyl-L-methionine to nm(5)s(2)U34, to form mnm(5)s(2)U34. The chain is tRNA 5-methylaminomethyl-2-thiouridine biosynthesis bifunctional protein MnmC from Burkholderia mallei (strain SAVP1).